Consider the following 424-residue polypeptide: Enolase (424 aa).

Q163 is a (2R)-2-phosphoglycerate binding site. E205 functions as the Proton donor in the catalytic mechanism. Positions 242, 285, and 312 each coordinate Mg(2+). Positions 337, 366, 367, and 388 each coordinate (2R)-2-phosphoglycerate. The active-site Proton acceptor is the K337.

This sequence belongs to the enolase family. The cofactor is Mg(2+).

The protein localises to the cytoplasm. The protein resides in the secreted. Its subcellular location is the cell surface. It carries out the reaction (2R)-2-phosphoglycerate = phosphoenolpyruvate + H2O. Its pathway is carbohydrate degradation; glycolysis; pyruvate from D-glyceraldehyde 3-phosphate: step 4/5. In terms of biological role, catalyzes the reversible conversion of 2-phosphoglycerate (2-PG) into phosphoenolpyruvate (PEP). It is essential for the degradation of carbohydrates via glycolysis. The polypeptide is Enolase (Sphingopyxis alaskensis (strain DSM 13593 / LMG 18877 / RB2256) (Sphingomonas alaskensis)).